We begin with the raw amino-acid sequence, 196 residues long: 3-isopropylmalate dehydratase small subunit (196 aa).

The protein belongs to the LeuD family. LeuD type 1 subfamily. As to quaternary structure, heterodimer of LeuC and LeuD.

It carries out the reaction (2R,3S)-3-isopropylmalate = (2S)-2-isopropylmalate. The protein operates within amino-acid biosynthesis; L-leucine biosynthesis; L-leucine from 3-methyl-2-oxobutanoate: step 2/4. Functionally, catalyzes the isomerization between 2-isopropylmalate and 3-isopropylmalate, via the formation of 2-isopropylmaleate. In Streptococcus sanguinis (strain SK36), this protein is 3-isopropylmalate dehydratase small subunit.